Consider the following 162-residue polypeptide: MGLETEKADVQLCMDDDAYSRHSAVDFGDLEQLADSGSDRDPRRLNSHLQVGFEDVIAEPVSTHSFDKVWICSHALFEVSKYVIYKFLTLLLAMPMAFAAGVLFATLSCLHIWIIMPFVKTCLMVLPSVQTIWKSVTDAVIAPLCSSVGRSFSSVSLQVSHD.

The Cytoplasmic portion of the chain corresponds to 1–86 (MGLETEKADV…FEVSKYVIYK (86 aa)). Tyr19 carries the phosphotyrosine; by SRC modification. Ser20, Ser23, and Ser36 each carry phosphoserine. An intramembrane region (helical) is located at residues 87–107 (FLTLLLAMPMAFAAGVLFATL). The Cytoplasmic portion of the chain corresponds to 108 to 162 (SCLHIWIIMPFVKTCLMVLPSVQTIWKSVTDAVIAPLCSSVGRSFSSVSLQVSHD).

This sequence belongs to the caveolin family. Monomer or homodimer. Interacts with CAV1; the interaction forms a stable heterooligomeric complex that is required for targeting to lipid rafts and for caveolae formation. Tyrosine phosphorylated forms do not form heterooligomers with the Tyr-19-phosphorylated form existing as a monomer or dimer. Interacts (tyrosine phosphorylated form) with the SH2 domain-containing proteins, RASA1, NCK1 and SRC. Interacts (tyrosine phosphorylated form) with INSR. Interacts (Tyr-19 phosphorylated form) with MAPK1 (phosphorylated form); the interaction, promoted by insulin, leads to nuclear location and MAPK1 activation. Interacts with STAT3; the interaction is increased on insulin-induced tyrosine phosphorylation leading to STAT activation. In terms of processing, phosphorylated on serine and tyrosine residues. CAV1 promotes phosphorylation on Ser-23 which then targets the complex to the plasma membrane, lipid rafts and caveolae. Phosphorylation on Ser-36 appears to modulate mitosis in endothelial cells. Phosphorylation on Tyr-19 is required for insulin-induced phosphorylation of MAPK1 and DNA binding of STAT3. Tyrosine phosphorylation is induced by both EGF and insulin.

Its subcellular location is the nucleus. The protein localises to the cytoplasm. It localises to the golgi apparatus membrane. It is found in the cell membrane. The protein resides in the membrane. Its subcellular location is the caveola. Functionally, may act as a scaffolding protein within caveolar membranes. Interacts directly with G-protein alpha subunits and can functionally regulate their activity. Acts as an accessory protein in conjunction with CAV1 in targeting to lipid rafts and driving caveolae formation. The Ser-36 phosphorylated form has a role in modulating mitosis in endothelial cells. Positive regulator of cellular mitogenesis of the MAPK signaling pathway. Required for the insulin-stimulated nuclear translocation and activation of MAPK1 and STAT3, and the subsequent regulation of cell cycle progression. This is Caveolin-2 (CAV2) from Canis lupus familiaris (Dog).